The following is a 338-amino-acid chain: 1-aminocyclopropane-1-carboxylate deaminase (338 aa).

N6-(pyridoxal phosphate)lysine is present on Lys51. Catalysis depends on Ser78, which acts as the Nucleophile.

Belongs to the ACC deaminase/D-cysteine desulfhydrase family. As to quaternary structure, homotrimer. The cofactor is pyridoxal 5'-phosphate.

It carries out the reaction 1-aminocyclopropane-1-carboxylate + H2O = 2-oxobutanoate + NH4(+). Functionally, catalyzes a cyclopropane ring-opening reaction, the irreversible conversion of 1-aminocyclopropane-1-carboxylate (ACC) to ammonia and alpha-ketobutyrate. Allows growth on ACC as a nitrogen source. The chain is 1-aminocyclopropane-1-carboxylate deaminase from Burkholderia ambifaria (strain ATCC BAA-244 / DSM 16087 / CCUG 44356 / LMG 19182 / AMMD) (Burkholderia cepacia (strain AMMD)).